Reading from the N-terminus, the 56-residue chain is Ferredoxin (56 aa).

4Fe-4S ferredoxin-type domains are found at residues 2 to 29 (AYVI…AGDD) and 29 to 56 (DKYV…PQPE). Positions 9, 12, 15, 19, 38, 41, 44, and 48 each coordinate [4Fe-4S] cluster.

The cofactor is [4Fe-4S] cluster.

In terms of biological role, ferredoxins are iron-sulfur proteins that transfer electrons in a wide variety of metabolic reactions. The polypeptide is Ferredoxin (Acetoanaerobium sticklandii (strain ATCC 12662 / DSM 519 / JCM 1433 / CCUG 9281 / NCIMB 10654 / HF) (Clostridium sticklandii)).